The sequence spans 79 residues: MAQQRRGGFKRRKKVDYIAANKIEYVDYKDTELLSRFVSERGKILPRRVTGTSAKNQRKVTTAIKRARVMALMPFVNED.

This sequence belongs to the bacterial ribosomal protein bS18 family. As to quaternary structure, part of the 30S ribosomal subunit. Forms a tight heterodimer with protein bS6.

Functionally, binds as a heterodimer with protein bS6 to the central domain of the 16S rRNA, where it helps stabilize the platform of the 30S subunit. The protein is Small ribosomal subunit protein bS18 of Streptococcus pneumoniae (strain Hungary19A-6).